Here is a 257-residue protein sequence, read N- to C-terminus: Deoxyribose-phosphate aldolase (257 aa).

Residue D102 is the Proton donor/acceptor of the active site. Residue K166 is the Schiff-base intermediate with acetaldehyde of the active site. The active-site Proton donor/acceptor is K198.

This sequence belongs to the DeoC/FbaB aldolase family. DeoC type 2 subfamily.

Its subcellular location is the cytoplasm. It catalyses the reaction 2-deoxy-D-ribose 5-phosphate = D-glyceraldehyde 3-phosphate + acetaldehyde. It participates in carbohydrate degradation; 2-deoxy-D-ribose 1-phosphate degradation; D-glyceraldehyde 3-phosphate and acetaldehyde from 2-deoxy-alpha-D-ribose 1-phosphate: step 2/2. Functionally, catalyzes a reversible aldol reaction between acetaldehyde and D-glyceraldehyde 3-phosphate to generate 2-deoxy-D-ribose 5-phosphate. In Shewanella halifaxensis (strain HAW-EB4), this protein is Deoxyribose-phosphate aldolase.